Consider the following 525-residue polypeptide: MVFAGGGLQQGSLEENIDVEHIASMSLFSDFFSYVSSTVGSWSVHSIQPLKRLTSKKRVSESAAVQCISAEVQRNSSTQGTAEALAESVVKPTRRRSSQWKKSTHPLSEVAVHNKPSDCWIVVKNKVYDVSNFADEHPGGSVISTYFGRDGTDVFSSFHAASTWKILQDFYIGDVERVEPTPELLKDFREMRALFLREQLFKSSKLYYVMKLLTNVAIFAASIAIICWSKTISAVLASACMMALCFQQCGWLSHDFLHNQVFETRWLNEVVGYVIGNAVLGFSTGWWKEKHNLHHAAPNECDQTYQPIDEDIDTLPLIAWSKDILATVENKTFLRILQYQHLFFMGLLFFARGSWLFWSWRYTSTAVLSPVDRLLEKGTVLFHYFWFVGTACYLLPGWKPLVWMAVTELMSGMLLGFVFVLSHNGMEVYNSSKEFVSAQIVSTRDIKGNIFNDWFTGGLNRQIEHHLFPTMPRHNLNKIAPRVEVFCKKHGLVYEDVSIATGTCKVLKALKEVAEAAAEQHATTS.

Residues 102 to 176 (KSTHPLSEVA…LQDFYIGDVE (75 aa)) form the Cytochrome b5 heme-binding domain. Residues H137 and H159 each coordinate heme. A helical membrane pass occupies residues 216–236 (VAIFAASIAIICWSKTISAVL). The short motif at 254–258 (HDFLH) is the Histidine box-1 element. A helical membrane pass occupies residues 266–286 (WLNEVVGYVIGNAVLGFSTGW). The Histidine box-2 signature appears at 291 to 295 (HNLHH). 3 helical membrane passes run 340–360 (QHLF…FWSW), 378–398 (GTVL…LPGW), and 401–421 (LVWM…VFVL). Residues 462–466 (QIEHH) carry the Histidine box-3 motif.

This sequence belongs to the fatty acid desaturase type 1 family.

Its subcellular location is the membrane. It carries out the reaction (9Z,12Z,15Z)-octadecatrienoyl-containing glycerolipid + 2 Fe(II)-[cytochrome b5] + O2 + 2 H(+) = (6Z,9Z,12Z,15Z)-octadecatetraenoyl-containing glycerolipid + 2 Fe(III)-[cytochrome b5] + 2 H2O. The enzyme catalyses a (9Z,12Z)-octadecadienoyl-containing glycerolipid + 2 Fe(II)-[cytochrome b5] + O2 + 2 H(+) = (6Z,9Z,12Z)-octadecatrienoyl-containing glycerolipid + 2 Fe(III)-[cytochrome b5] + 2 H2O. Its pathway is lipid metabolism; polyunsaturated fatty acid biosynthesis. Its function is as follows. Fatty acid desaturase able to introduce a delta(6)-double bond into delta(9)-unsaturated fatty-acid substrates. Can use both linoleic acid (18:2(9Z,12Z)) and alpha-linolenic acid (18:3(9Z,12Z,15Z)) as substrates. Required for the biosynthesis of arachidonic acid (20:4(5z,8Z,11Z,14Z)). The chain is Acyl-lipid (9-3)-desaturase from Physcomitrium patens (Spreading-leaved earth moss).